Consider the following 567-residue polypeptide: Proline--tRNA ligase (567 aa).

This sequence belongs to the class-II aminoacyl-tRNA synthetase family. ProS type 1 subfamily. As to quaternary structure, homodimer.

It is found in the cytoplasm. It carries out the reaction tRNA(Pro) + L-proline + ATP = L-prolyl-tRNA(Pro) + AMP + diphosphate. In terms of biological role, catalyzes the attachment of proline to tRNA(Pro) in a two-step reaction: proline is first activated by ATP to form Pro-AMP and then transferred to the acceptor end of tRNA(Pro). As ProRS can inadvertently accommodate and process non-cognate amino acids such as alanine and cysteine, to avoid such errors it has two additional distinct editing activities against alanine. One activity is designated as 'pretransfer' editing and involves the tRNA(Pro)-independent hydrolysis of activated Ala-AMP. The other activity is designated 'posttransfer' editing and involves deacylation of mischarged Ala-tRNA(Pro). The misacylated Cys-tRNA(Pro) is not edited by ProRS. The polypeptide is Proline--tRNA ligase (Staphylococcus epidermidis (strain ATCC 35984 / DSM 28319 / BCRC 17069 / CCUG 31568 / BM 3577 / RP62A)).